A 228-amino-acid chain; its full sequence is SPbeta prophage-derived uncharacterized protein YomL (228 aa).

Residues 1–28 form the signal peptide; sequence MRKKRVITCVMAASLTLGSLLPAGYATA.

The polypeptide is SPbeta prophage-derived uncharacterized protein YomL (yomL) (Bacillus subtilis (strain 168)).